Here is a 292-residue protein sequence, read N- to C-terminus: Small ribosomal subunit biogenesis GTPase RsgA (292 aa).

One can recognise a CP-type G domain in the interval Lys-62–Leu-213. Residues Ser-111–Asp-114 and Gly-156–Thr-164 contribute to the GTP site. Residues Cys-237, Cys-242, His-244, and Cys-250 each coordinate Zn(2+).

It belongs to the TRAFAC class YlqF/YawG GTPase family. RsgA subfamily. As to quaternary structure, monomer. Associates with 30S ribosomal subunit, binds 16S rRNA. Requires Zn(2+) as cofactor.

The protein resides in the cytoplasm. Its function is as follows. One of several proteins that assist in the late maturation steps of the functional core of the 30S ribosomal subunit. Helps release RbfA from mature subunits. May play a role in the assembly of ribosomal proteins into the subunit. Circularly permuted GTPase that catalyzes slow GTP hydrolysis, GTPase activity is stimulated by the 30S ribosomal subunit. This is Small ribosomal subunit biogenesis GTPase RsgA from Streptococcus pneumoniae serotype 4 (strain ATCC BAA-334 / TIGR4).